A 131-amino-acid chain; its full sequence is Glycine cleavage system H protein (131 aa).

The Lipoyl-binding domain maps to 24–106 (VYCVGITEHA…YTDGWLFKIK (83 aa)). Lys-65 is modified (N6-lipoyllysine).

This sequence belongs to the GcvH family. In terms of assembly, the glycine cleavage system is composed of four proteins: P, T, L and H. It depends on (R)-lipoate as a cofactor.

In terms of biological role, the glycine cleavage system catalyzes the degradation of glycine. The H protein shuttles the methylamine group of glycine from the P protein to the T protein. The chain is Glycine cleavage system H protein from Sodalis glossinidius (strain morsitans).